Consider the following 360-residue polypeptide: Peptide chain release factor 1 (360 aa).

An N5-methylglutamine modification is found at glutamine 235. Residues 283–308 (MQKRQQAEASERRNLLGSGDRSDRNR) show a composition bias toward basic and acidic residues. Residues 283–313 (MQKRQQAEASERRNLLGSGDRSDRNRTYNFP) form a disordered region.

Belongs to the prokaryotic/mitochondrial release factor family. In terms of processing, methylated by PrmC. Methylation increases the termination efficiency of RF1.

The protein localises to the cytoplasm. Its function is as follows. Peptide chain release factor 1 directs the termination of translation in response to the peptide chain termination codons UAG and UAA. In Yersinia enterocolitica serotype O:8 / biotype 1B (strain NCTC 13174 / 8081), this protein is Peptide chain release factor 1.